Here is a 469-residue protein sequence, read N- to C-terminus: 3-isopropylmalate dehydratase large subunit (469 aa).

Residues C347, C407, and C410 each coordinate [4Fe-4S] cluster.

This sequence belongs to the aconitase/IPM isomerase family. LeuC type 1 subfamily. Heterodimer of LeuC and LeuD. [4Fe-4S] cluster is required as a cofactor.

It catalyses the reaction (2R,3S)-3-isopropylmalate = (2S)-2-isopropylmalate. It functions in the pathway amino-acid biosynthesis; L-leucine biosynthesis; L-leucine from 3-methyl-2-oxobutanoate: step 2/4. Catalyzes the isomerization between 2-isopropylmalate and 3-isopropylmalate, via the formation of 2-isopropylmaleate. The sequence is that of 3-isopropylmalate dehydratase large subunit from Sorangium cellulosum (strain So ce56) (Polyangium cellulosum (strain So ce56)).